A 231-amino-acid chain; its full sequence is 5'-methylthioadenosine/S-adenosylhomocysteine nucleosidase (231 aa).

The active-site Proton acceptor is the E12. Substrate contacts are provided by residues G78, V153, and 174–175; that span reads ME. The Proton donor role is filled by D198.

This sequence belongs to the PNP/UDP phosphorylase family. MtnN subfamily.

It catalyses the reaction S-adenosyl-L-homocysteine + H2O = S-(5-deoxy-D-ribos-5-yl)-L-homocysteine + adenine. The enzyme catalyses S-methyl-5'-thioadenosine + H2O = 5-(methylsulfanyl)-D-ribose + adenine. The catalysed reaction is 5'-deoxyadenosine + H2O = 5-deoxy-D-ribose + adenine. Its pathway is amino-acid biosynthesis; L-methionine biosynthesis via salvage pathway; S-methyl-5-thio-alpha-D-ribose 1-phosphate from S-methyl-5'-thioadenosine (hydrolase route): step 1/2. Catalyzes the irreversible cleavage of the glycosidic bond in both 5'-methylthioadenosine (MTA) and S-adenosylhomocysteine (SAH/AdoHcy) to adenine and the corresponding thioribose, 5'-methylthioribose and S-ribosylhomocysteine, respectively. Also cleaves 5'-deoxyadenosine, a toxic by-product of radical S-adenosylmethionine (SAM) enzymes, into 5-deoxyribose and adenine. The chain is 5'-methylthioadenosine/S-adenosylhomocysteine nucleosidase from Vibrio atlanticus (strain LGP32) (Vibrio splendidus (strain Mel32)).